Reading from the N-terminus, the 153-residue chain is T cell receptor delta constant (153 aa).

N-linked (GlcNAc...) asparagine glycosylation is present at N14. Cysteines 20 and 71 form a disulfide. N-linked (GlcNAc...) asparagine glycosylation is present at N77. A compositionally biased stretch (basic and acidic residues) spans 85-102; the sequence is FEVKTDSTDHVKPKETEN. The disordered stretch occupies residues 85 to 112; that stretch reads FEVKTDSTDHVKPKETENTKQPSKSCHK. The helical transmembrane segment at 130–152 threads the bilayer; that stretch reads LGLRMLFAKTVAVNFLLTAKLFF.

Gamma-delta TR is a heterodimer composed of a gamma and delta chain; disulfide-linked. The gamma-delta TR is associated with the transmembrane signaling CD3 coreceptor proteins following the stoichiometry: a single gamma-delta TR heterodimer associates with one CD3D-CD3E heterodimer, one CD3G-CD3E heterodimer and one CD247 homodimer forming a stable octameric structure. Upon activation, gamma-delta TR complex associates with FCER1G to initiate intracellular signaling.

It localises to the cell membrane. Its function is as follows. Constant region of T cell receptor (TR) delta chain that participates in the antigen recognition. Gamma-delta TRs recognize a variety of self and foreign non-peptide antigens frequently expressed at the epithelial boundaries between the host and external environment, including endogenous lipids presented by MH-like protein CD1D and phosphoantigens presented by butyrophilin-like molecule BTN3A1. Upon antigen recognition induces rapid, innate-like immune responses involved in pathogen clearance and tissue repair. Binding of gamma-delta TR complex to antigen triggers phosphorylation of immunoreceptor tyrosine-based activation motifs (ITAMs) in the CD3 chains by the LCK and FYN kinases, allowing the recruitment, phosphorylation, and activation of ZAP70 that facilitates phosphorylation of the scaffolding proteins LCP2 and LAT. This lead to the formation of a supramolecular signalosome that recruits the phospholipase PLCG1, resulting in calcium mobilization and ERK activation, ultimately leading to T cell expansion and differentiation into effector cells. Gamma-delta TRs are produced through somatic rearrangement of a limited repertoire of variable (V), diversity (D), and joining (J) genes. The potential diversity of gamma-delta TRs is conferred by the unique ability to rearrange (D) genes in tandem and to utilize all three reading frames. The combinatorial diversity is considerably increased by the sequence exonuclease trimming and random nucleotide (N) region additions which occur during the V-(D)-J rearrangements. The polypeptide is T cell receptor delta constant (Homo sapiens (Human)).